The following is a 283-amino-acid chain: Elongation factor Ts (283 aa).

The involved in Mg(2+) ion dislocation from EF-Tu stretch occupies residues 80 to 83 (TDFV).

It belongs to the EF-Ts family.

The protein localises to the cytoplasm. Its function is as follows. Associates with the EF-Tu.GDP complex and induces the exchange of GDP to GTP. It remains bound to the aminoacyl-tRNA.EF-Tu.GTP complex up to the GTP hydrolysis stage on the ribosome. The polypeptide is Elongation factor Ts (Pectobacterium carotovorum subsp. carotovorum (strain PC1)).